We begin with the raw amino-acid sequence, 126 residues long: Small ribosomal subunit protein uS8 (126 aa).

This sequence belongs to the universal ribosomal protein uS8 family. In terms of assembly, part of the 30S ribosomal subunit. Contacts proteins S5 and S12.

Its function is as follows. One of the primary rRNA binding proteins, it binds directly to 16S rRNA central domain where it helps coordinate assembly of the platform of the 30S subunit. The chain is Small ribosomal subunit protein uS8 from Desulfovibrio desulfuricans (strain ATCC 27774 / DSM 6949 / MB).